The chain runs to 124 residues: Heat-labile enterotoxin B chain (124 aa).

A signal peptide spans 1-21 (MNKVKCYVLFTALLSSLYAHG). Cysteines 30 and 107 form a disulfide.

In terms of assembly, heterohexamer of one A chain and of five B chains.

Functionally, the biological activity of the toxin is produced by the A chain, which activates intracellular adenyl cyclase. The chain is Heat-labile enterotoxin B chain (eltB) from Escherichia coli.